A 253-amino-acid polypeptide reads, in one-letter code: H repeat-associated putative transposase YbfD (253 aa).

This sequence belongs to the transposase 11 family.

This is H repeat-associated putative transposase YbfD (ybfD) from Escherichia coli (strain K12).